Consider the following 142-residue polypeptide: Baculoviral IAP repeat-containing protein 5 (142 aa).

The BIR repeat unit spans residues Arg-18–Ser-88. Ser-20 is modified (phosphoserine; by AURKC). The residue at position 23 (Lys-23) is an N6-acetyllysine. At Thr-34 the chain carries Phosphothreonine; by CDK1 and CDK15. The residue at position 48 (Thr-48) is a Phosphothreonine. Zn(2+) is bound by residues Cys-57, Cys-60, His-77, and Cys-84. Residues Lys-90, Lys-110, Lys-112, and Lys-115 each carry the N6-acetyllysine modification. Thr-117 bears the Phosphothreonine; by AURKB mark. Lys-129 carries the post-translational modification N6-acetyllysine.

It belongs to the IAP family. As to quaternary structure, monomer or homodimer. Exists as a homodimer in the apo state and as a monomer in the CPC-bound state. The monomer protects cells against apoptosis more efficiently than the dimer. Only the dimeric form is capable of enhancing tubulin stability in cells. When phosphorylated, interacts with LAMTOR5/HBXIP; the resulting complex binds pro-CASP9, as well as active CASP9, but much less efficiently. Component of the chromosomal passenger complex (CPC) composed of at least BIRC5/survivin, CDCA8/borealin, INCENP, AURKB or AURKC; in the complex forms a triple-helix bundle-based subcomplex with INCENP and CDCA8. Interacts with JTB. Interacts (via BIR domain) with histone H3 phosphorylated at 'Thr-3' (H3pT3). Interacts with EVI5. Interacts with GTP-bound RAN in both the S and M phases of the cell cycle. Interacts with USP9X. Interacts with tubulin. Interacts with BIRC2/c-IAP1. The acetylated form at Lys-129 interacts with STAT3. The monomeric form deacetylated at Lys-129 interacts with XPO1/CRM1. The monomeric form interacts with XIAP/BIRC4. Both the dimeric and monomeric form can interact with DIABLO/SMAC. Interacts with BIRC6/bruce. Interacts with FBXL7; this interaction facilitates the polyubiquitination and subsequent proteasomal degradation of BIRC5 by the SCF(FBXL7) E3 ubiquitin-protein ligase complex. Ubiquitinated by the Cul9-RING ubiquitin-protein ligase complex, leading to its degradation. Ubiquitination is required for centrosomal targeting. Deubiquitinated by USP35 or USP38; leading to stabilization. In terms of processing, acetylation at Lys-129 results in its homodimerization, while deacetylation promotes the formation of monomers which heterodimerize with XPO1/CRM1 which facilitates its nuclear export. The acetylated form represses STAT3 transactivation. The dynamic equilibrium between its acetylation and deacetylation at Lys-129 determines its interaction with XPO1/CRM1, its subsequent subcellular localization, and its ability to inhibit STAT3 transactivation. Post-translationally, in vitro phosphorylation at Thr-117 by AURKB prevents interaction with INCENP and localization to mitotic chromosomes. Phosphorylation at Thr-48 by CK2 is critical for its mitotic and anti-apoptotic activities. Phosphorylation at Thr-34 by CDK15 is critical for its anti-apoptotic activity. Phosphorylation at Ser-20 by AURKC is critical for regulation of proper chromosome alignment and segregation, and possibly cytokinesis.

The protein localises to the cytoplasm. Its subcellular location is the nucleus. It is found in the chromosome. The protein resides in the centromere. It localises to the cytoskeleton. The protein localises to the spindle. Its subcellular location is the kinetochore. It is found in the midbody. Multitasking protein that has dual roles in promoting cell proliferation and preventing apoptosis. Component of a chromosome passage protein complex (CPC) which is essential for chromosome alignment and segregation during mitosis and cytokinesis. Acts as an important regulator of the localization of this complex; directs CPC movement to different locations from the inner centromere during prometaphase to midbody during cytokinesis and participates in the organization of the center spindle by associating with polymerized microtubules. Involved in the recruitment of CPC to centromeres during early mitosis via association with histone H3 phosphorylated at 'Thr-3' (H3pT3) during mitosis. The complex with RAN plays a role in mitotic spindle formation by serving as a physical scaffold to help deliver the RAN effector molecule TPX2 to microtubules. May counteract a default induction of apoptosis in G2/M phase. The acetylated form represses STAT3 transactivation of target gene promoters. May play a role in neoplasia. Inhibitor of CASP3 and CASP7. Essential for the maintenance of mitochondrial integrity and function. This chain is Baculoviral IAP repeat-containing protein 5 (BIRC5), found in Pongo abelii (Sumatran orangutan).